Here is a 721-residue protein sequence, read N- to C-terminus: Cytosolic carboxypeptidase 2 (721 aa).

Residues 43–71 form a disordered region; it reads TASDMINSSSPSESSDSNLEEEQEESKPC. Positions 50 to 59 are enriched in low complexity; the sequence is SSSPSESSDS. One can recognise a Peptidase M14 domain in the interval 334 to 605; the sequence is YPYTYSKLQH…CFCDTLLDFC (272 aa). 3 residues coordinate Zn(2+): His400, Glu403, and His496. Catalysis depends on Glu569, which acts as the Proton donor/acceptor. The segment at 645-721 is disordered; sequence DIESSTSGSN…TQHGDTEDQS (77 aa). The segment covering 647-660 has biased composition (low complexity); that stretch reads ESSTSGSNSTESDG. Residues 672–688 are compositionally biased toward basic residues; the sequence is GKKKLLRSRKERNRLRQ. A compositionally biased stretch (polar residues) spans 703–714; it reads YSCQTLNATTQH.

This sequence belongs to the peptidase M14 family. Requires Zn(2+) as cofactor.

It is found in the cytoplasm. The protein localises to the cytosol. Its subcellular location is the cytoskeleton. It localises to the microtubule organizing center. The protein resides in the centrosome. It is found in the centriole. The protein localises to the cilium basal body. The enzyme catalyses (L-glutamyl)(n+1)-gamma-L-glutamyl-L-glutamyl-[protein] + H2O = (L-glutamyl)(n)-gamma-L-glutamyl-L-glutamyl-[protein] + L-glutamate. Metallocarboxypeptidase that mediates deglutamylation of target proteins. Catalyzes the deglutamylation of polyglutamate side chains generated by post-translational polyglutamylation in proteins such as tubulins. Also removes gene-encoded polyglutamates from the carboxy-terminus of target proteins such as MYLK. Does not show detyrosinase or deglycylase activities from the carboxy-terminus of tubulin. Its function is as follows. Metallocarboxypeptidase that mediates deglutamylation of tubulin and non-tubulin target proteins. Catalyzes the removal of polyglutamate side chains present on the gamma-carboxyl group of glutamate residues within the C-terminal tail of tubulin protein. Specifically cleaves tubulin long-side-chains, while it is not able to remove the branching point glutamate. Also catalyzes the removal of polyglutamate residues from the carboxy-terminus of non-tubulin proteins. In Danio rerio (Zebrafish), this protein is Cytosolic carboxypeptidase 2 (zte25).